Here is a 211-residue protein sequence, read N- to C-terminus: Pyridoxine/pyridoxamine 5'-phosphate oxidase (211 aa).

Residues 7-10 (RREY) and K65 each bind substrate. Residues 60 to 65 (RIVLLK), 75 to 76 (YT), R81, K82, and Q104 each bind FMN. Substrate contacts are provided by Y122, R126, and S130. Residues 139–140 (QS) and W184 each bind FMN. 190-192 (RLH) is a substrate binding site. R194 lines the FMN pocket.

This sequence belongs to the pyridoxamine 5'-phosphate oxidase family. As to quaternary structure, homodimer. FMN serves as cofactor.

It catalyses the reaction pyridoxamine 5'-phosphate + O2 + H2O = pyridoxal 5'-phosphate + H2O2 + NH4(+). The enzyme catalyses pyridoxine 5'-phosphate + O2 = pyridoxal 5'-phosphate + H2O2. The protein operates within cofactor metabolism; pyridoxal 5'-phosphate salvage; pyridoxal 5'-phosphate from pyridoxamine 5'-phosphate: step 1/1. It participates in cofactor metabolism; pyridoxal 5'-phosphate salvage; pyridoxal 5'-phosphate from pyridoxine 5'-phosphate: step 1/1. In terms of biological role, catalyzes the oxidation of either pyridoxine 5'-phosphate (PNP) or pyridoxamine 5'-phosphate (PMP) into pyridoxal 5'-phosphate (PLP). In Vibrio cholerae serotype O1 (strain ATCC 39541 / Classical Ogawa 395 / O395), this protein is Pyridoxine/pyridoxamine 5'-phosphate oxidase.